The following is a 374-amino-acid chain: tRNA-specific 2-thiouridylase MnmA (374 aa).

ATP is bound by residues Gly12–Ser19 and Met38. Residues Asn98–Asp100 form an interaction with target base in tRNA region. Residue Cys103 is the Nucleophile of the active site. An intrachain disulfide couples Cys103 to Cys207. Position 128 (Gly128) interacts with ATP. The interaction with tRNA stretch occupies residues Lys157–Gln159. Cys207 functions as the Cysteine persulfide intermediate in the catalytic mechanism. Residues Arg321–Tyr322 are interaction with tRNA.

Belongs to the MnmA/TRMU family.

The protein resides in the cytoplasm. The enzyme catalyses S-sulfanyl-L-cysteinyl-[protein] + uridine(34) in tRNA + AH2 + ATP = 2-thiouridine(34) in tRNA + L-cysteinyl-[protein] + A + AMP + diphosphate + H(+). Catalyzes the 2-thiolation of uridine at the wobble position (U34) of tRNA, leading to the formation of s(2)U34. In Aliivibrio fischeri (strain MJ11) (Vibrio fischeri), this protein is tRNA-specific 2-thiouridylase MnmA.